Here is a 415-residue protein sequence, read N- to C-terminus: Phosphoglycerate kinase (415 aa).

Substrate-binding positions include 24–26 (DLN), arginine 43, 66–69 (HLGR), arginine 125, and arginine 165. ATP-binding positions include lysine 215, glycine 303, glutamate 334, and 363–366 (GGDS).

The protein belongs to the phosphoglycerate kinase family. In terms of assembly, monomer.

It localises to the cytoplasm. The catalysed reaction is (2R)-3-phosphoglycerate + ATP = (2R)-3-phospho-glyceroyl phosphate + ADP. The protein operates within carbohydrate degradation; glycolysis; pyruvate from D-glyceraldehyde 3-phosphate: step 2/5. The chain is Phosphoglycerate kinase from Mycobacterium avium (strain 104).